The primary structure comprises 619 residues: Chaperone protein DnaK (619 aa).

Threonine 175 is modified (phosphothreonine; by autocatalysis). The segment at 578 to 619 (NGGAQGQGFDPNNMGGANAGAGATNNNDDNVVDADFEVQDDK) is disordered. The span at 589 to 606 (NNMGGANAGAGATNNNDD) shows a compositional bias: low complexity. A compositionally biased stretch (acidic residues) spans 607–619 (NVVDADFEVQDDK).

Belongs to the heat shock protein 70 family.

Functionally, acts as a chaperone. The sequence is that of Chaperone protein DnaK from Clostridium perfringens (strain ATCC 13124 / DSM 756 / JCM 1290 / NCIMB 6125 / NCTC 8237 / Type A).